We begin with the raw amino-acid sequence, 351 residues long: Modulator of apoptosis 1 (351 aa).

Residues 49 to 52 carry the LIR motif; that stretch reads YRLL. Residues 120–127 are BH3-like; sequence LSRALGHE. Residues 202–205 are RASSF1-binding; it reads KRRR.

The protein belongs to the PNMA family. In terms of assembly, homodimer. Under normal circumstances, held in an inactive conformation by an intramolecular interaction. Interacts with BAX. Binding to RASSF1 isoform A (RASSF1A) relieves this inhibitory interaction and allows further binding to BAX. Also binds to BCL2 and BCLX. Recruited to the TNFRSF1A and TNFRSF10A complexes in response to their respective cognate ligand, after internalization. Interacts with TRIM39. Interacts with RASSF6. Interacts with ATG8 proteins MAP1LC3A, MAP1LC3B and MAP1LC3C. Does not interact with ATG8 proteins GABARAPL1, GABARAPL2 and GABARAP. Interacts with SQSTM1; promoting dissociation of SQSTM1 inclusion bodies that sequester KEAP1. Ubiquitinated and degraded during mitotic exit by APC/C-Cdh1, this modification is inhibited by TRIM39. As to expression, widely expressed, with high levels in heart and brain.

The protein resides in the cytoplasm. It is found in the cytosol. It localises to the mitochondrion outer membrane. Its subcellular location is the extracellular vesicle membrane. In terms of biological role, retrotransposon-derived protein that forms virion-like capsids. Acts as an effector of BAX during apoptosis: enriched at outer mitochondria membrane and associates with BAX upon induction of apoptosis, facilitating BAX-dependent mitochondrial outer membrane permeabilization and apoptosis. Required for death receptor-dependent apoptosis. When associated with RASSF1, promotes BAX conformational change and translocation to mitochondrial membranes in response to TNF and TNFSF10 stimulation. Also promotes autophagy: promotes phagophore closure via association with ATG8 proteins. Acts as an inhibitor of the NFE2L2/NRF2 pathway via interaction with SQSTM1: interaction promotes dissociation of SQSTM1 inclusion bodies that sequester KEAP1, relieving inactivation of the BCR(KEAP1) complex. The polypeptide is Modulator of apoptosis 1 (Homo sapiens (Human)).